The following is a 125-amino-acid chain: Plastocyanin (125 aa).

The signal sequence occupies residues 1 to 34 (MKVLASFARRLSLFAVAAVLCVGSFFLSAAPASA). The 91-residue stretch at 35 to 125 (QTVAIKMGAD…AGMVGKIVVQ (91 aa)) folds into the Plastocyanin-like domain. Residues histidine 73, cysteine 110, histidine 113, and methionine 118 each coordinate Cu cation.

It belongs to the plastocyanin family. The cofactor is Cu(2+).

Its subcellular location is the cellular thylakoid membrane. In terms of biological role, participates in electron transfer between P700 and the cytochrome b6-f complex in photosystem I. The polypeptide is Plastocyanin (petE) (Synechococcus elongatus (strain ATCC 33912 / PCC 7942 / FACHB-805) (Anacystis nidulans R2)).